The chain runs to 421 residues: uncharacterized protein (421 aa).

N6-(pyridoxal phosphate)lysine is present on K249.

The protein belongs to the class-I pyridoxal-phosphate-dependent aminotransferase family. Pyridoxal 5'-phosphate serves as cofactor.

It localises to the cytoplasm. This is an uncharacterized protein from Schizosaccharomyces pombe (strain 972 / ATCC 24843) (Fission yeast).